The sequence spans 64 residues: UPF0370 protein YE1145 (64 aa).

A helical membrane pass occupies residues 3 to 23 (WLADYWWVVLIILVGMILNGI). The tract at residues 36–64 (SNKPEIPPHRDNNAQWDDDDDWPDKDKKK) is disordered.

Belongs to the UPF0370 family.

The protein resides in the cell membrane. This chain is UPF0370 protein YE1145, found in Yersinia enterocolitica serotype O:8 / biotype 1B (strain NCTC 13174 / 8081).